A 358-amino-acid chain; its full sequence is Biotin synthase (358 aa).

The Radical SAM core domain maps to 44–272; that stretch reads NRVRLNYLVN…DSEVRAAAGR (229 aa). Cys59, Cys63, and Cys66 together coordinate [4Fe-4S] cluster. Positions 103, 136, 196, and 267 each coordinate [2Fe-2S] cluster.

The protein belongs to the radical SAM superfamily. Biotin synthase family. In terms of assembly, homodimer. [4Fe-4S] cluster is required as a cofactor. The cofactor is [2Fe-2S] cluster.

The enzyme catalyses (4R,5S)-dethiobiotin + (sulfur carrier)-SH + 2 reduced [2Fe-2S]-[ferredoxin] + 2 S-adenosyl-L-methionine = (sulfur carrier)-H + biotin + 2 5'-deoxyadenosine + 2 L-methionine + 2 oxidized [2Fe-2S]-[ferredoxin]. It functions in the pathway cofactor biosynthesis; biotin biosynthesis; biotin from 7,8-diaminononanoate: step 2/2. In terms of biological role, catalyzes the conversion of dethiobiotin (DTB) to biotin by the insertion of a sulfur atom into dethiobiotin via a radical-based mechanism. This is Biotin synthase from Cutibacterium acnes (strain DSM 16379 / KPA171202) (Propionibacterium acnes).